Consider the following 364-residue polypeptide: 3-isopropylmalate dehydrogenase (364 aa).

77–90 (GPKWDNLPTDKRPE) is an NAD(+) binding site. Substrate contacts are provided by R97, R107, R135, and D224. Mg(2+)-binding residues include D224, D248, and D252. Residue 281-293 (GSAPDIAGKGIAN) participates in NAD(+) binding.

Belongs to the isocitrate and isopropylmalate dehydrogenases family. LeuB type 1 subfamily. As to quaternary structure, homodimer. Requires Mg(2+) as cofactor. It depends on Mn(2+) as a cofactor.

It localises to the cytoplasm. It catalyses the reaction (2R,3S)-3-isopropylmalate + NAD(+) = 4-methyl-2-oxopentanoate + CO2 + NADH. The protein operates within amino-acid biosynthesis; L-leucine biosynthesis; L-leucine from 3-methyl-2-oxobutanoate: step 3/4. Its function is as follows. Catalyzes the oxidation of 3-carboxy-2-hydroxy-4-methylpentanoate (3-isopropylmalate) to 3-carboxy-4-methyl-2-oxopentanoate. The product decarboxylates to 4-methyl-2 oxopentanoate. The polypeptide is 3-isopropylmalate dehydrogenase (leuB) (Aquifex aeolicus (strain VF5)).